The chain runs to 358 residues: Peptide chain release factor 1 (358 aa).

Position 233 is an N5-methylglutamine (Q233).

Belongs to the prokaryotic/mitochondrial release factor family. Methylated by PrmC. Methylation increases the termination efficiency of RF1.

It is found in the cytoplasm. In terms of biological role, peptide chain release factor 1 directs the termination of translation in response to the peptide chain termination codons UAG and UAA. The polypeptide is Peptide chain release factor 1 (Geobacillus kaustophilus (strain HTA426)).